Consider the following 210-residue polypeptide: 3-hexulose-6-phosphate synthase 3 (210 aa).

Belongs to the HPS/KGPDC family. HPS subfamily.

The catalysed reaction is D-ribulose 5-phosphate + formaldehyde = D-arabino-hex-3-ulose 6-phosphate. It participates in one-carbon metabolism; formaldehyde assimilation via RuMP pathway; D-fructose 6-phosphate from D-ribulose 5-phosphate and formaldehyde: step 1/2. Its function is as follows. Catalyzes the condensation of ribulose 5-phosphate with formaldehyde to form 3-hexulose 6-phosphate. In Staphylococcus saprophyticus subsp. saprophyticus (strain ATCC 15305 / DSM 20229 / NCIMB 8711 / NCTC 7292 / S-41), this protein is 3-hexulose-6-phosphate synthase 3.